Here is a 425-residue protein sequence, read N- to C-terminus: UDP-N-acetylglucosamine 1-carboxyvinyltransferase (425 aa).

Residue 22 to 23 (KN) participates in phosphoenolpyruvate binding. A UDP-N-acetyl-alpha-D-glucosamine-binding site is contributed by Arg-91. The Proton donor role is filled by Cys-115. Cys-115 bears the 2-(S-cysteinyl)pyruvic acid O-phosphothioketal mark. Residues 120-124 (RPIDL), Asp-305, and Val-327 each bind UDP-N-acetyl-alpha-D-glucosamine.

Belongs to the EPSP synthase family. MurA subfamily.

It localises to the cytoplasm. The catalysed reaction is phosphoenolpyruvate + UDP-N-acetyl-alpha-D-glucosamine = UDP-N-acetyl-3-O-(1-carboxyvinyl)-alpha-D-glucosamine + phosphate. Its pathway is cell wall biogenesis; peptidoglycan biosynthesis. Cell wall formation. Adds enolpyruvyl to UDP-N-acetylglucosamine. The sequence is that of UDP-N-acetylglucosamine 1-carboxyvinyltransferase from Coprothermobacter proteolyticus (strain ATCC 35245 / DSM 5265 / OCM 4 / BT).